A 1192-amino-acid polypeptide reads, in one-letter code: DNA topoisomerase 2 (1192 aa).

Residues Asn64, Asn95, and 142–149 each bind ATP; that span reads GTNGVGLK. Residues Glu438, Asp539, and Asp541 each coordinate Mg(2+). In terms of domain architecture, Topo IIA-type catalytic spans 707–1174; the sequence is IPNFLDGMTR…PGASVWLEEI (468 aa). Tyr800 functions as the O-(5'-phospho-DNA)-tyrosine intermediate in the catalytic mechanism.

Belongs to the type II topoisomerase family. The cofactor is Mg(2+). Mn(2+) serves as cofactor. It depends on Ca(2+) as a cofactor.

The protein resides in the host cytoplasm. It carries out the reaction ATP-dependent breakage, passage and rejoining of double-stranded DNA.. In terms of biological role, type II topoisomerase. Processively relaxes supercoiled DNA. Displays DNA-supercoiling activity only when associated with the viral histone-like protein. The chain is DNA topoisomerase 2 from African swine fever virus (isolate Tick/South Africa/Pretoriuskop Pr4/1996) (ASFV).